Reading from the N-terminus, the 56-residue chain is Metallothionein (56 aa).

Residues C9, C11, C14, C16, C32, C36, H40, C47, H49, C52, and C54 each contribute to the Zn(2+) site.

Belongs to the metallothionein superfamily. Type 14 family.

In terms of biological role, may play a role in essential metal ion homeostasis (especially zinc homeostasis) and resistance to certain non-essential metal ions. Binds four zinc ions. The chain is Metallothionein (smtA) from Synechococcus elongatus (strain ATCC 33912 / PCC 7942 / FACHB-805) (Anacystis nidulans R2).